Reading from the N-terminus, the 130-residue chain is D-ribose pyranase (130 aa).

His20 (proton donor) is an active-site residue. Residues Asp28, His97, and 119–121 contribute to the substrate site; that span reads YAN.

Belongs to the RbsD / FucU family. RbsD subfamily. Homodecamer.

The protein resides in the cytoplasm. It catalyses the reaction beta-D-ribopyranose = beta-D-ribofuranose. The protein operates within carbohydrate metabolism; D-ribose degradation; D-ribose 5-phosphate from beta-D-ribopyranose: step 1/2. In terms of biological role, catalyzes the interconversion of beta-pyran and beta-furan forms of D-ribose. This chain is D-ribose pyranase, found in Paracidovorax citrulli (strain AAC00-1) (Acidovorax citrulli).